The following is a 143-amino-acid chain: Hemoglobin-1 (143 aa).

The residue at position 2 (Ser-2) is an N-acetylserine. A Globin domain is found at 2–143 (SLSAAQKDNV…ALMGMIRPNM (142 aa)). A heme b-binding site is contributed by His-97.

The protein belongs to the globin family. Monomer.

It is found in the cytoplasm. Its function is as follows. Serves to transport hydrogen sulfide to autotrophic bacteria. The chain is Hemoglobin-1 from Phacoides pectinatus (Thick lucine).